The primary structure comprises 91 residues: Long neurotoxin OH-37 (91 aa).

The N-terminal stretch at 1–21 (MKTLLLTLVVMTIVCLDLGYS) is a signal peptide. 5 cysteine pairs are disulfide-bonded: Cys-24–Cys-41, Cys-34–Cys-62, Cys-47–Cys-51, Cys-66–Cys-77, and Cys-78–Cys-83.

It belongs to the three-finger toxin family. Long-chain subfamily. Type II alpha-neurotoxin sub-subfamily. As to expression, expressed by the venom gland.

It is found in the secreted. In terms of biological role, binds with high affinity to muscular (alpha-1/CHRNA1) and neuronal (alpha-7/CHRNA7) nicotinic acetylcholine receptor (nAChR) and inhibits acetylcholine from binding to the receptor, thereby impairing neuromuscular and neuronal transmission. The protein is Long neurotoxin OH-37 of Ophiophagus hannah (King cobra).